The sequence spans 193 residues: ATP synthase subunit b 1 (193 aa).

Residues glutamine 9–glycine 28 form a disordered region. A compositionally biased stretch (basic and acidic residues) spans glutamate 10 to threonine 20. A helical membrane pass occupies residues threonine 40–leucine 59.

It belongs to the ATPase B chain family. F-type ATPases have 2 components, F(1) - the catalytic core - and F(0) - the membrane proton channel. F(1) has five subunits: alpha(3), beta(3), gamma(1), delta(1), epsilon(1). F(0) has three main subunits: a(1), b(2) and c(10-14). The alpha and beta chains form an alternating ring which encloses part of the gamma chain. F(1) is attached to F(0) by a central stalk formed by the gamma and epsilon chains, while a peripheral stalk is formed by the delta and b chains.

The protein localises to the cell inner membrane. In terms of biological role, f(1)F(0) ATP synthase produces ATP from ADP in the presence of a proton or sodium gradient. F-type ATPases consist of two structural domains, F(1) containing the extramembraneous catalytic core and F(0) containing the membrane proton channel, linked together by a central stalk and a peripheral stalk. During catalysis, ATP synthesis in the catalytic domain of F(1) is coupled via a rotary mechanism of the central stalk subunits to proton translocation. Component of the F(0) channel, it forms part of the peripheral stalk, linking F(1) to F(0). The protein is ATP synthase subunit b 1 of Chelativorans sp. (strain BNC1).